The sequence spans 170 residues: Cathelicidin antimicrobial peptide (170 aa).

Positions 1-30 (MKTQRDGHSLGWWSLVLLLLGLVMPLAIIA) are cleaved as a signal peptide. A propeptide spans 31–131 (QVLSYKEAVL…DISCDKDNKR (101 aa)) (cathelin-like domain (CLD)). 2 disulfide bridges follow: C86–C97 and C108–C125. The tract at residues 150–162 (SKRIVQRIKDFLR) is active core.

The protein belongs to the cathelicidin family. Monomer, homodimer or homotrimer (in vitro). Oligomerizes as tetra- or hexamer in solution (in vitro). In terms of processing, proteolytically cleaved by proteinase PRTN3 into antibacterial peptide LL-37. Proteolytically cleaved by cathepsin CTSG and neutrophil elastase ELANE. Resistant to proteolytic degradation in solution, and when bound to both zwitterionic (mimicking mammalian membranes) and negatively charged membranes (mimicking bacterial membranes). Post-translationally, after secretion onto the skin surface, the CAMP gene product is processed by a serine protease-dependent mechanism into multiple novel antimicrobial peptides distinct from and shorter than cathelicidin LL-37. These peptides show enhanced antimicrobial action, acquiring the ability to kill skin pathogens such as S.aureus, E.coli and C.albicans. These peptides have lost the ability to stimulate CXCL8/IL8 release from keratinocytes. The peptides act synergistically, killing bacteria at lower concentrations when present together, and maintain activity at increased salt condition.

The protein localises to the secreted. The protein resides in the vesicle. Antimicrobial protein that is an integral component of the innate immune system. Binds to bacterial lipopolysaccharides (LPS). Acts via neutrophil N-formyl peptide receptors to enhance the release of CXCL2. Postsecretory processing generates multiple cathelicidin antimicrobial peptides with various lengths which act as a topical antimicrobial defense in sweat on skin. The unprocessed precursor form, cathelicidin antimicrobial peptide, inhibits the growth of Gram-negative E.coli and E.aerogenes with efficiencies comparable to that of the mature peptide LL-37 (in vitro). Its function is as follows. Antimicrobial peptide that is an integral component of the innate immune system. Binds to bacterial lipopolysaccharides (LPS). Causes membrane permeabilization by forming transmembrane pores (in vitro). Causes lysis of E.coli. Exhibits antimicrobial activity against Gram-negative bacteria such as P.aeruginosa, S.typhimurium, E.aerogenes, E.coli and P.syringae, Gram-positive bacteria such as L.monocytogenes, S.epidermidis, S.pyogenes and S.aureus, as well as vancomycin-resistant enterococci (in vitro). Exhibits antimicrobial activity against methicillin-resistant S.aureus, P.mirabilis, and C.albicans in low-salt media, but not in media containing 100 mM NaCl (in vitro). Forms chiral supramolecular assemblies with quinolone signal (PQS) molecules of P.aeruginosa, which may lead to interference of bacterial quorum signaling and perturbance of bacterial biofilm formation. May form supramolecular fiber-like assemblies on bacterial membranes. Induces cytokine and chemokine producation as well as TNF/TNFA and CSF2/GMCSF production in normal human keratinocytes. Exhibits hemolytic activity against red blood cells. Functionally, exhibits antimicrobial activity against E.coli and B.megaterium (in vitro). This Gorilla gorilla gorilla (Western lowland gorilla) protein is Cathelicidin antimicrobial peptide.